Consider the following 111-residue polypeptide: MKENKIRKNKEFRHVYRRGKSYSNRLLVLYICKNRCNINRLGVSVSKKVGKSVTRNRVKRLIKESYRLNLDKDMKQGYDLVFIARNSSNDKDYKDIESALINLLKKAGIYN.

It belongs to the RnpA family. Consists of a catalytic RNA component (M1 or rnpB) and a protein subunit.

The enzyme catalyses Endonucleolytic cleavage of RNA, removing 5'-extranucleotides from tRNA precursor.. In terms of biological role, RNaseP catalyzes the removal of the 5'-leader sequence from pre-tRNA to produce the mature 5'-terminus. It can also cleave other RNA substrates such as 4.5S RNA. The protein component plays an auxiliary but essential role in vivo by binding to the 5'-leader sequence and broadening the substrate specificity of the ribozyme. The sequence is that of Ribonuclease P protein component from Clostridium botulinum (strain Loch Maree / Type A3).